Here is a 35-residue protein sequence, read N- to C-terminus: Kappa-theraphotoxin-Tb1b (35 aa).

Intrachain disulfides connect Cys3-Cys18, Cys10-Cys23, and Cys17-Cys30.

This sequence belongs to the neurotoxin 10 (Hwtx-1) family. 58 subfamily. Monomer. Expressed by the venom gland.

It localises to the secreted. Low-affinity blocker of Kv4.2/KCND2 voltage-gated potassium channels. Is presumed to shift the voltage-dependence of channel activation to more depolarized potentials and to bind to the S3-S4 linker region of the voltage sensor domain. The sequence is that of Kappa-theraphotoxin-Tb1b from Theraphosa blondi (Goliath birdeating spider).